A 151-amino-acid polypeptide reads, in one-letter code: Ubiquitin-conjugating enzyme E2 2 (151 aa).

The tract at residues 1–26 (MSTSARRRLMRDFKRMQTDPPAGVSA) is disordered. In terms of domain architecture, UBC core spans 4–150 (SARRRLMRDF…VRETVEKSWE (147 aa)). Residue C88 is the Glycyl thioester intermediate of the active site.

This sequence belongs to the ubiquitin-conjugating enzyme family.

It localises to the cytoplasm. Its subcellular location is the nucleus. The catalysed reaction is S-ubiquitinyl-[E1 ubiquitin-activating enzyme]-L-cysteine + [E2 ubiquitin-conjugating enzyme]-L-cysteine = [E1 ubiquitin-activating enzyme]-L-cysteine + S-ubiquitinyl-[E2 ubiquitin-conjugating enzyme]-L-cysteine.. It participates in protein modification; protein ubiquitination. Catalyzes the covalent attachment of ubiquitin to other proteins. Plays a role in transcription regulation by catalyzing the monoubiquitination of histone H2B to form H2BK123ub1. H2BK123ub1 gives a specific tag for epigenetic transcriptional activation and is also a prerequisite for H3K4me and H3K79me formation. Also involved in postreplication repair of UV-damaged DNA, in N-end rule-dependent protein degradation and in sporulation. The sequence is that of Ubiquitin-conjugating enzyme E2 2 (uvsJ) from Emericella nidulans (strain FGSC A4 / ATCC 38163 / CBS 112.46 / NRRL 194 / M139) (Aspergillus nidulans).